The following is a 396-amino-acid chain: S-adenosylmethionine synthase (396 aa).

Residue histidine 16 participates in ATP binding. Aspartate 18 contacts Mg(2+). Glutamate 44 is a K(+) binding site. L-methionine-binding residues include glutamate 57 and glutamine 100. The interval 100 to 110 is flexible loop; it reads QSVDIAQGVDR. ATP contacts are provided by residues 165–167, aspartate 240, 246–247, alanine 263, and lysine 267; these read DAK and RK. Aspartate 240 provides a ligand contact to L-methionine. Lysine 271 provides a ligand contact to L-methionine.

This sequence belongs to the AdoMet synthase family. In terms of assembly, homotetramer; dimer of dimers. Requires Mg(2+) as cofactor. It depends on K(+) as a cofactor.

Its subcellular location is the cytoplasm. The enzyme catalyses L-methionine + ATP + H2O = S-adenosyl-L-methionine + phosphate + diphosphate. It functions in the pathway amino-acid biosynthesis; S-adenosyl-L-methionine biosynthesis; S-adenosyl-L-methionine from L-methionine: step 1/1. Its function is as follows. Catalyzes the formation of S-adenosylmethionine (AdoMet) from methionine and ATP. The overall synthetic reaction is composed of two sequential steps, AdoMet formation and the subsequent tripolyphosphate hydrolysis which occurs prior to release of AdoMet from the enzyme. The chain is S-adenosylmethionine synthase from Pseudomonas putida (strain ATCC 700007 / DSM 6899 / JCM 31910 / BCRC 17059 / LMG 24140 / F1).